Here is a 158-residue protein sequence, read N- to C-terminus: UPF0260 protein RHECIAT_CH0001358 (158 aa).

It belongs to the UPF0260 family.

The sequence is that of UPF0260 protein RHECIAT_CH0001358 from Rhizobium etli (strain CIAT 652).